The sequence spans 194 residues: Thiol:disulfide interchange protein CycY (194 aa).

A signal peptide spans 1–37 (MSEQSTSANPQRRTFLMVLPLIAFIGLALLFWFRLGS). Residues 46–190 (ALIGRPAPQT…LRSVLLPQME (145 aa)) form the Thioredoxin domain. Cys92 and Cys95 are disulfide-bonded.

It belongs to the thioredoxin family. DsbE subfamily.

It localises to the periplasm. In terms of biological role, required for disulfide bond formation in some periplasmic proteins. Also acts as a disulfide oxidoreductase in cytochromes c biogenesis. The cysteines of apocytochromes c must be in the reduced state for covalent linkage between the two moieties to occur. The chain is Thiol:disulfide interchange protein CycY (cycY) from Bradyrhizobium diazoefficiens (strain JCM 10833 / BCRC 13528 / IAM 13628 / NBRC 14792 / USDA 110).